The primary structure comprises 156 residues: Cell division protein SepF (156 aa).

Residues 15 to 58 (SDVVPEDEDDEVIDEEPESSFDTDRSVTPIPAASTQPSTSQRKS) are disordered. Acidic residues predominate over residues 18-35 (VPEDEDDEVIDEEPESSF). Residues 47-57 (ASTQPSTSQRK) are compositionally biased toward polar residues.

It belongs to the SepF family. In terms of assembly, homodimer. Interacts with FtsZ.

The protein resides in the cytoplasm. In terms of biological role, cell division protein that is part of the divisome complex and is recruited early to the Z-ring. Probably stimulates Z-ring formation, perhaps through the cross-linking of FtsZ protofilaments. Its function overlaps with FtsA. The protein is Cell division protein SepF of Bifidobacterium animalis subsp. lactis (strain AD011).